Here is an 877-residue protein sequence, read N- to C-terminus: DNA polymerase I (877 aa).

The region spanning 177–270 is the 5'-3' exonuclease domain; the sequence is TPAQFIDLKA…LEDLVYSGPD (94 aa). Residues 302–465 enclose the 3'-5' exonuclease domain; that stretch reads DFTIVDQISQ…TEPILLEKLS (164 aa).

Belongs to the DNA polymerase type-A family. As to quaternary structure, single-chain monomer with multiple functions.

The catalysed reaction is DNA(n) + a 2'-deoxyribonucleoside 5'-triphosphate = DNA(n+1) + diphosphate. Its function is as follows. In addition to polymerase activity, this DNA polymerase exhibits 3'-5' and 5'-3' exonuclease activity. The chain is DNA polymerase I (polA) from Streptococcus pneumoniae serotype 4 (strain ATCC BAA-334 / TIGR4).